A 496-amino-acid polypeptide reads, in one-letter code: MAVSDVAGSQSRYDAVLVGAGIMSATLAALLHELDPELRLLMVERLQAPGLESSAAENNAGTGHAANCELNYTPLQPDGSVATAKALAINTAFERSLEFWASLTEKGKLLPQQFLHLVPHISVVFGDADLAFLHQRFQQLSALPAFASMQWSTDAAELAEWMPLVMEGRANAESVAATCIKRGTDVDFGLLTRAYVKSLQASGALELSCGCEVVHLHRLGKHRWNLDLKHSSGSRSVQTPFVFLGAGGGALPLLQRSGIPEAAAYAGFPVSGQWLVCSEPGLTARHHAKVYGKAKVGAPPMSVPHLDSRWIDGCRSLLFGPYAGFSSKFLKQGSRLDLLRSVRRSNFRSMLEVGFKNFDLVTYLLSELQQSEKDRFETLKQFLPNAQLNDWKLSVAGQRVQIIKGTAEGGRLQMGTEVVSAEDGSLAALLGASPGASTAVTVMLEVLQRCWSERMASESWQERLQKLLPSYGHDPNSDPLLLMQMRIRSNELLSFT.

It belongs to the MQO family. The cofactor is FAD.

It carries out the reaction (S)-malate + a quinone = a quinol + oxaloacetate. The protein operates within carbohydrate metabolism; tricarboxylic acid cycle; oxaloacetate from (S)-malate (quinone route): step 1/1. The chain is Probable malate:quinone oxidoreductase from Prochlorococcus marinus (strain MIT 9303).